The following is a 376-amino-acid chain: N-acetyldiaminopimelate deacetylase (376 aa).

Asp-69 is an active-site residue. Residue Glu-128 is the Proton acceptor of the active site.

It belongs to the peptidase M20A family. N-acetyldiaminopimelate deacetylase subfamily.

The catalysed reaction is N-acetyl-(2S,6S)-2,6-diaminopimelate + H2O = (2S,6S)-2,6-diaminopimelate + acetate. Its pathway is amino-acid biosynthesis; L-lysine biosynthesis via DAP pathway; LL-2,6-diaminopimelate from (S)-tetrahydrodipicolinate (acetylase route): step 3/3. In terms of biological role, catalyzes the conversion of N-acetyl-diaminopimelate to diaminopimelate and acetate. The chain is N-acetyldiaminopimelate deacetylase from Streptococcus pneumoniae serotype 19F (strain G54).